Reading from the N-terminus, the 129-residue chain is MKSALTIALFCAGGGLARYYLSGWVYGLLGRAFPFGTLAVNLIGAYCIGLIMEISLRSTLIPATLRLGLTVGFMGGLTTFSTFSYETFKLLEDGQYLVAMVNALASVVMCLLCTWLGVITARALIQGGF.

4 helical membrane passes run 5-25 (LTIA…SGWV), 32-52 (AFPF…GLIM), 60-80 (LIPA…LTTF), and 99-119 (AMVN…LGVI). The Na(+) site is built by Gly-75 and Thr-78.

It belongs to the fluoride channel Fluc/FEX (TC 1.A.43) family.

The protein resides in the cell inner membrane. It carries out the reaction fluoride(in) = fluoride(out). Na(+) is not transported, but it plays an essential structural role and its presence is essential for fluoride channel function. In terms of biological role, fluoride-specific ion channel. Important for reducing fluoride concentration in the cell, thus reducing its toxicity. The protein is Fluoride-specific ion channel FluC of Pelobacter propionicus (strain DSM 2379 / NBRC 103807 / OttBd1).